Consider the following 646-residue polypeptide: Interferon-induced GTP-binding protein MxA (646 aa).

The region spanning 34–307 (DLALPAIAVI…LVHHIQKSLP (274 aa)) is the Dynamin-type G domain. Residues 44 to 51 (GDQSSGKS) are G1 motif. GTP is bound at residue 44 to 51 (GDQSSGKS). The segment at 69 to 71 (VTR) is G2 motif. Residues 145-148 (DLPG) form a G3 motif region. Residues 145–149 (DLPGI) and 214–217 (TKPD) contribute to the GTP site. Positions 214-217 (TKPD) are G4 motif. Residues 246–249 (RCRG) form a G5 motif region. Residues 546 to 637 (LREMRLHLKS…PLGHLLEVTF (92 aa)) form the GED domain.

It belongs to the TRAFAC class dynamin-like GTPase superfamily. Dynamin/Fzo/YdjA family.

The protein localises to the cytoplasm. This chain is Interferon-induced GTP-binding protein MxA (mxa), found in Danio rerio (Zebrafish).